The chain runs to 414 residues: Procollagen C-endopeptidase enhancer 2 (414 aa).

An N-terminal signal peptide occupies residues 1 to 22 (MGGASACIPLCLLLATARMARP). Cystine bridges form between cysteine 32–cysteine 58, cysteine 85–cysteine 106, cysteine 153–cysteine 180, cysteine 207–cysteine 230, cysteine 296–cysteine 363, cysteine 300–cysteine 366, and cysteine 311–cysteine 414. CUB domains follow at residues 32–143 (CGGI…YSAA) and 153–267 (CGGR…YKFR). The 119-residue stretch at 296-414 (CQQKCRRMGT…PMNALKNKQC (119 aa)) folds into the NTR domain. The N-linked (GlcNAc...) asparagine glycan is linked to asparagine 354.

As to quaternary structure, interacts with heparin with high affinity, and type I or II collagen. In terms of processing, O-glycosylated; contains sialic acid.

The protein resides in the secreted. In terms of biological role, binds to the C-terminal propeptide of types I and II procollagens and may enhance the cleavage of that propeptide by BMP1. This chain is Procollagen C-endopeptidase enhancer 2 (Pcolce2), found in Mus musculus (Mouse).